An 884-amino-acid chain; its full sequence is Cytosolic carboxypeptidase-like protein 5 (884 aa).

The 414-residue stretch at 157-570 (YPFSYSDCQD…AMAIAALDMA (414 aa)) folds into the Peptidase M14 domain. Zn(2+)-binding residues include H252 and E255. Disordered stretches follow at residues 343–364 (HPQS…PLSD) and 376–401 (HLGH…KASG). H434 lines the Zn(2+) pocket. E516 (proton donor/acceptor) is an active-site residue. 2 disordered regions span residues 603 to 737 (LSST…HSTG) and 784 to 859 (QVRP…RICY). The span at 620-635 (PPRSNSGLPVSCSENP) shows a compositional bias: polar residues. 2 stretches are compositionally biased toward low complexity: residues 641 to 666 (SFST…NSPS) and 714 to 737 (PTSS…HSTG). S839 is subject to Phosphoserine. Residues 846–857 (ISCSLSDSQSRI) show a composition bias toward polar residues.

It belongs to the peptidase M14 family. The cofactor is Zn(2+).

It is found in the cytoplasm. Its subcellular location is the cytosol. The protein resides in the nucleus. It localises to the cytoskeleton. The protein localises to the spindle. It is found in the midbody. The enzyme catalyses gamma-L-glutamyl-L-glutamyl-[protein] + H2O = L-glutamyl-[protein] + L-glutamate. The catalysed reaction is (L-glutamyl)(n+1)-gamma-L-glutamyl-L-glutamyl-[protein] + H2O = (L-glutamyl)(n)-gamma-L-glutamyl-L-glutamyl-[protein] + L-glutamate. It catalyses the reaction C-terminal L-alpha-aminoacyl-L-glutamyl-[tubulin] + H2O = C-terminal L-alpha-aminoacyl-[tubulin] + L-glutamate. It carries out the reaction C-terminal L-alpha-aminoacyl-L-glutamyl-L-glutamyl-[tubulin] + H2O = C-terminal L-alpha-aminoacyl-L-glutamyl-[tubulin] + L-glutamate. Its function is as follows. Metallocarboxypeptidase that mediates deglutamylation of tubulin and non-tubulin target proteins. Catalyzes the removal of polyglutamate side chains present on the gamma-carboxyl group of glutamate residues within the C-terminal tail of alpha- and beta-tubulin. Cleaves alpha- and gamma-linked polyglutamate tubulin side-chain, as well as the branching point glutamate. Also catalyzes the removal of alpha-linked glutamate residues from the carboxy-terminus of alpha-tubulin. Mediates deglutamylation of nucleotidyltransferase CGAS, leading to CGAS antiviral defense response activation. This Ailuropoda melanoleuca (Giant panda) protein is Cytosolic carboxypeptidase-like protein 5 (AGBL5).